Consider the following 734-residue polypeptide: MLLWLLLLILTPGREQSGVAPKAVLLLNPPWSTAFKGEKVALICSSISHSLAQGDTYWYHDEKLLKIKHDKIQITEPGNYQCKTRGSSLSDAVHVEFSPDWLILQALHPVFEGDNVILRCQGKDNKNTHQKVYYKDGKQLPNSYNLEKITVNSVSRDNSKYHCTAYRKFYILDIEVTSKPLNIQVQELFLHPVLRASSSTPIEGSPMTLTCETQLSPQRPDVQLQFSLFRDSQTLGLGWSRSPRLQIPAMWTEDSGSYWCEVETVTHSIKKRSLRSQIRVQRVPVSNVNLEIRPTGGQLIEGENMVLICSVAQGSGTVTFSWHKEGRVRSLGRKTQRSLLAELHVLTVKESDAGRYYCAADNVHSPILSTWIRVTVRIPVSHPVLTFRAPRAHTVVGDLLELHCESLRGSPPILYRFYHEDVTLGNSSAPSGGGASFNLSLTAEHSGNYSCDADNGLGAQHSHGVSLRVTVPVSRPVLTLRAPGAQAVVGDLLELHCESLRGSFPILYWFYHEDDTLGNISAHSGGGASFNLSLTTEHSGNYSCEADNGLGAQHSKVVTLNVTGTSRNRTGLTAAGITGLVLSILVLAAAAALLHYARARRKPGGLSATGTSSHSPSECQEPSSSRPSRIDPQEPTHSKPLAPMELEPMYSNVNPGDSNPIYSQIWSIQHTKENSANCPMMHQEHEELTVLYSELKKTHPDDSAGEASSRGRAHEEDDEENYENVPRVLLASDH.

An N-terminal signal peptide occupies residues 1–17 (MLLWLLLLILTPGREQS). Residues 18-573 (GVAPKAVLLL…GTSRNRTGLT (556 aa)) lie on the Extracellular side of the membrane. 6 consecutive Ig-like C2-type domains span residues 21 to 98 (PKAV…VEFS), 99 to 182 (PDWL…KPLN), 192 to 270 (PVLR…HSIK), 284 to 369 (PVSN…PILS), 383 to 470 (PVLT…LRVT), and 476 to 563 (PVLT…LNVT). Disulfide bonds link C44–C82, C120–C163, C211–C260, C309–C358, C404–C451, and C497–C544. The N-linked (GlcNAc...) asparagine glycan is linked to N561. The helical transmembrane segment at 574 to 594 (AAGITGLVLSILVLAAAAALL) threads the bilayer. Residues 595 to 734 (HYARARRKPG…VPRVLLASDH (140 aa)) are Cytoplasmic-facing. Residues 603-655 (PGGLSATGTSSHSPSECQEPSSSRPSRIDPQEPTHSKPLAPMELEPMYSNVNP) form a disordered region. Positions 608 to 627 (ATGTSSHSPSECQEPSSSRP) are enriched in polar residues. Over residues 628–637 (SRIDPQEPTH) the composition is skewed to basic and acidic residues. 4 short sequence motifs (ITIM motif) span residues 648 to 653 (PMYSNV), 660 to 665 (PIYSQI), 690 to 695 (VLYSEL), and 720 to 725 (ENYENV). Phosphotyrosine is present on residues Y650, Y662, Y692, and Y722. Residues 695–734 (LKKTHPDDSAGEASSRGRAHEEDDEENYENVPRVLLASDH) form a disordered region.

As to quaternary structure, interacts (via phosphorylated ITIM motifs) with phosphatases INPP5D, PTPN6 and PTPN11. Interacts (via ITIM motifs) SYK and ZAP70. Interacts with IZUMO1R/JUNO. Interacts (via extracellular domain) with IZUMO1; the interaction replaces IZUMO1R/JUNO as IZUMO1 receptor after adhesion between sperm and egg. Phosphorylated on cytoplasmic tyrosines; required for interaction with protein tyrosine phosphatases and protein tyrosine kinases. In terms of tissue distribution, primarily expressed in secondary lymphoid tissues by mature subsets of B-cells. Low expression on transitional B cells which increases to higher surface expression on mature and memory B-cells with innate-like features (at protein level). Expressed a low levels in naive and germinal center B-cells but also expressed in NK cells (at protein level). Expressed in unfertilized oocytes (at protein level). Expressed in a population of thymically derived naturally occurring regulatory T-cells that exhibits a memory phenotype, specialized in suppressing immune response to self-antigens. Detected in spleen, lymph node, peripheral blood lymphocytes, thymus, bone marrow, kidney, salivary gland, adrenal gland and uterus.

It localises to the cell membrane. The protein resides in the cell projection. Its subcellular location is the microvillus membrane. Its function is as follows. Promotes TLR9-induced B-cell proliferation, activation and survival but inhibits antibody production and suppresses plasma cell differentiation. Enhances activation of NF-kappa-B and MAPK signaling pathways in TLR9 stimulated B-cells. Has inhibitory potentional on B-cell receptor (BCR)-mediated signaling, possibly through association with SH2 domain-containing phosphatases. Inhibits cell tyrosine phosphorylation, calcium mobilization and activation-induced cell death induced through BCR signaling. Regulatory T-cells expressing FCRL3 exhibit a memory phenotype, are relatively nonresponsive to antigenic stimulation in presence of IL2 and have reduced capacity to suppress the proliferation of effector T-cells. Acts as a human-specific epitope on the cell surface of oocytes (oolemma) and plays a role during sperm-egg adhesion and fusion. Interacts with the IZUMO1-IZUMO1R/JUNO sperm-egg complex and replaces IZUMO1R/JUNO as IZUMO1 receptor during fertilization, thereby permitting species-specific gamete fusion. The chain is Fc receptor-like protein 3 from Homo sapiens (Human).